A 392-amino-acid chain; its full sequence is Tropomodulin (392 aa).

Disordered regions lie at residues 1–30 (MSQA…QLPS), 59–90 (DLNN…GPYK), and 118–138 (QKRG…PENG). Residues 16–29 (SAPSANSQQGTQLP) show a composition bias toward polar residues. Basic and acidic residues-rich tracts occupy residues 76–90 (RCRD…GPYK) and 122–138 (KVYD…PENG).

The protein belongs to the tropomodulin family. In terms of assembly, binds to the N-terminus of actin.

It is found in the cytoplasm. The protein resides in the cytoskeleton. Its function is as follows. Acts as the pointed end capping protein which maintains the length and dynamics of the actin filament. Blocks the elongation and depolymerization of the actin filaments at the pointed end. The polypeptide is Tropomodulin (unc-94) (Caenorhabditis elegans).